The sequence spans 118 residues: Basic phospholipase A2 PA-12C (118 aa).

Disulfide bonds link C11–C71, C27–C117, C29–C45, C44–C98, C51–C91, C60–C84, and C78–C89. Y28, G30, and G32 together coordinate Ca(2+). Residue H48 is part of the active site. Residue D49 coordinates Ca(2+). D92 is an active-site residue.

The protein belongs to the phospholipase A2 family. Group I subfamily. D49 sub-subfamily. Requires Ca(2+) as cofactor. Expressed by the venom gland.

It is found in the secreted. It carries out the reaction a 1,2-diacyl-sn-glycero-3-phosphocholine + H2O = a 1-acyl-sn-glycero-3-phosphocholine + a fatty acid + H(+). Its function is as follows. PLA2 catalyzes the calcium-dependent hydrolysis of the 2-acyl groups in 3-sn-phosphoglycerides. This chain is Basic phospholipase A2 PA-12C, found in Pseudechis australis (Mulga snake).